Consider the following 179-residue polypeptide: Large ribosomal subunit protein uL5 (179 aa).

It belongs to the universal ribosomal protein uL5 family. As to quaternary structure, part of the 50S ribosomal subunit; part of the 5S rRNA/L5/L18/L25 subcomplex. Contacts the 5S rRNA and the P site tRNA. Forms a bridge to the 30S subunit in the 70S ribosome.

This is one of the proteins that bind and probably mediate the attachment of the 5S RNA into the large ribosomal subunit, where it forms part of the central protuberance. In the 70S ribosome it contacts protein S13 of the 30S subunit (bridge B1b), connecting the 2 subunits; this bridge is implicated in subunit movement. Contacts the P site tRNA; the 5S rRNA and some of its associated proteins might help stabilize positioning of ribosome-bound tRNAs. The polypeptide is Large ribosomal subunit protein uL5 (Alkaliphilus oremlandii (strain OhILAs) (Clostridium oremlandii (strain OhILAs))).